We begin with the raw amino-acid sequence, 98 residues long: Protein FAM24A (98 aa).

Positions Met-1–Cys-29 are cleaved as a signal peptide.

The protein belongs to the FAM24 family.

The protein resides in the secreted. This chain is Protein FAM24A (Fam24a), found in Rattus norvegicus (Rat).